We begin with the raw amino-acid sequence, 278 residues long: Indole-3-glycerol phosphate synthase (278 aa).

Belongs to the TrpC family.

It carries out the reaction 1-(2-carboxyphenylamino)-1-deoxy-D-ribulose 5-phosphate + H(+) = (1S,2R)-1-C-(indol-3-yl)glycerol 3-phosphate + CO2 + H2O. The protein operates within amino-acid biosynthesis; L-tryptophan biosynthesis; L-tryptophan from chorismate: step 4/5. The polypeptide is Indole-3-glycerol phosphate synthase (Stutzerimonas stutzeri (strain A1501) (Pseudomonas stutzeri)).